The following is a 319-amino-acid chain: Ribonucleoside-diphosphate reductase 2 subunit beta (319 aa).

Residues Asp-67, Glu-98, and His-101 each coordinate Fe cation. Tyr-105 is a catalytic residue. 3 residues coordinate Fe cation: Glu-158, Glu-192, and His-195.

This sequence belongs to the ribonucleoside diphosphate reductase small chain family. In terms of assembly, tetramer of two alpha and two beta subunits. Fe cation serves as cofactor.

The catalysed reaction is a 2'-deoxyribonucleoside 5'-diphosphate + [thioredoxin]-disulfide + H2O = a ribonucleoside 5'-diphosphate + [thioredoxin]-dithiol. Functionally, provides the precursors necessary for DNA synthesis. Catalyzes the biosynthesis of deoxyribonucleotides from the corresponding ribonucleotides. R2F contains the tyrosyl radical required for catalysis. This Escherichia coli (strain K12) protein is Ribonucleoside-diphosphate reductase 2 subunit beta (nrdF).